We begin with the raw amino-acid sequence, 276 residues long: MDPCSVGVQLRTTHDCHKTFYTRHTGFKTLKELSSNDMLLLQLRTGMTLSGNNTICLHHVKIYIERFEELQKSCCDPFNIHKKLAKKNLHVIDLDDATFLSAKFGRQLVPGWKLCPKCTQIINGSVDVDSDDRQRRKPESDGRTAKALRSLQFTNPGKQTEFAPESGKREKRKLTKNASASSDRQIIPAKSKVYDSQGLLIFSGMDLCDCLDEDCLGCFYACPTCGSTKCGAECRCDRKWLYEQIEIEGGEIIHNKHAGKAYGLLSPCHPYDILQK.

Positions Gln-159–Asp-183 are disordered. Lys-176 participates in a covalent cross-link: Glycyl lysine isopeptide (Lys-Gly) (interchain with G-Cter in SUMO2). Residues Ser-182 and Ser-266 each carry the phosphoserine modification.

Interacts with ARL14 and MYO1E.

It localises to the cytoplasm. Functionally, through its interaction with ARL14 and MYO1E, may connect MHC class II-containing cytoplasmic vesicles to the actin network and hence controls the movement of these vesicles along the actin cytoskeleton in dendritic cells. In Rattus norvegicus (Rat), this protein is ARL14 effector protein (Arl14ep).